The primary structure comprises 769 residues: Disintegrin and metalloproteinase domain-containing protein 11 (769 aa).

Positions 1–23 (MRLLRRWAFAALLLSLLPTPGLG) are cleaved as a signal peptide. The propeptide occupies 24–225 (TQGPAGALRW…PNRPRLRRKR (202 aa)). A disordered region spans residues 40–78 (GGPGAPEVTEPSRLVRESSGGEVRKQQLDTRVRQEPPGG). A compositionally biased stretch (basic and acidic residues) spans 61 to 73 (EVRKQQLDTRVRQ). N-linked (GlcNAc...) asparagine glycans are attached at residues N96 and N163. Residues 226-734 (QVRRGHPTVH…ERYKGPSGTN (509 aa)) lie on the Extracellular side of the membrane. Residues 239–438 (KYVELIVIND…GGGSCLFNKP (200 aa)) enclose the Peptidase M12B domain. Positions 332–769 (GRTFQSTSSG…NIRRGRSGGA (438 aa)) are required for localization to cerebellar cortex basket cell terminals. Also required for localization of KCNA1, KCNA2, DLG4 and ADAM22 to cerebellar cortex basket cell terminal perisomatic axons and pinceaux. Intrachain disulfides connect C349-C433, C392-C417, C394-C401, and C503-C523. The Disintegrin domain occupies 444 to 531 (PPECGNGFVE…QCPPNLHKLD (88 aa)). N605 and N673 each carry an N-linked (GlcNAc...) asparagine glycan. Cystine bridges form between C677/C692, C686/C698, and C700/C709. The EGF-like domain maps to 677–709 (CPGSGERRICSHHGVCSNEGKCICQPDWTGKDC). A helical membrane pass occupies residues 735 to 755 (IIIGSIAGAVLVAAIVLGGTG). The Cytoplasmic portion of the chain corresponds to 756-769 (WGFKNIRRGRSGGA).

Interacts with LGI1 and LGI4. Interacts with KCNA1/KV1.1, KCNA2/KV1.2, DLG4/PSD-95 and ADAM22. In terms of processing, the precursor is cleaved by a furin endopeptidase. As to expression, expressed predominantly in brain. Slightly detected or not at all in other tissues.

It localises to the presynaptic cell membrane. Its subcellular location is the perikaryon. The protein resides in the cell projection. The protein localises to the axon. Probable ligand for integrin in the brain. This is a non catalytic metalloprotease-like protein. Required for localization of the potassium channel subunit proteins KCNA1/KV1.1 and KCNA2/KV1.2 at cerebellar cortex basket cell distal terminals, is thereby involved in ephaptic inhibitory synchronization of Purkinje cell firing and response to stress. Plays a role in spatial learning and motor coordination. Involved in the nociceptive pain response to chemical-derived stimulation. The protein is Disintegrin and metalloproteinase domain-containing protein 11 (ADAM11) of Homo sapiens (Human).